Consider the following 293-residue polypeptide: NAD-dependent protein deacetylase (293 aa).

A Deacetylase sirtuin-type domain is found at 5-282; it reads PAHDHHTLQD…LHAPPHLPRA (278 aa). NAD(+)-binding positions include 27-47 and 105-108; these read GAGC…GGWK and QNVD. The active-site Proton acceptor is the histidine 123. Residues cysteine 131, cysteine 134, cysteine 182, and cysteine 185 each coordinate Zn(2+). Residues 222 to 224, 248 to 250, and cysteine 266 contribute to the NAD(+) site; these read GSS and NFG.

It belongs to the sirtuin family. Class II subfamily. It depends on Zn(2+) as a cofactor.

Its subcellular location is the cytoplasm. The catalysed reaction is N(6)-acetyl-L-lysyl-[protein] + NAD(+) + H2O = 2''-O-acetyl-ADP-D-ribose + nicotinamide + L-lysyl-[protein]. Functionally, NAD-dependent protein deacetylase which modulates the activities of several enzymes which are inactive in their acetylated form. The polypeptide is NAD-dependent protein deacetylase (Xanthomonas axonopodis pv. citri (strain 306)).